The following is a 270-amino-acid chain: Phosphatidylglycerol--prolipoprotein diacylglyceryl transferase (270 aa).

The next 7 helical transmembrane spans lie at 10–30, 56–76, 92–112, 120–140, 174–194, 202–222, and 236–256; these read VALA…LIGI, LIFW…VLFY, WKGG…AWWF, FFQL…AGRI, PSQL…LYIF, MAVS…VEFV, and WVTM…GLLW. A 1,2-diacyl-sn-glycero-3-phospho-(1'-sn-glycerol) is bound at residue R139.

Belongs to the Lgt family.

The protein resides in the cell inner membrane. It carries out the reaction L-cysteinyl-[prolipoprotein] + a 1,2-diacyl-sn-glycero-3-phospho-(1'-sn-glycerol) = an S-1,2-diacyl-sn-glyceryl-L-cysteinyl-[prolipoprotein] + sn-glycerol 1-phosphate + H(+). Its pathway is protein modification; lipoprotein biosynthesis (diacylglyceryl transfer). Catalyzes the transfer of the diacylglyceryl group from phosphatidylglycerol to the sulfhydryl group of the N-terminal cysteine of a prolipoprotein, the first step in the formation of mature lipoproteins. The chain is Phosphatidylglycerol--prolipoprotein diacylglyceryl transferase from Pseudomonas fluorescens (strain SBW25).